Reading from the N-terminus, the 181-residue chain is ATP synthase subunit delta (181 aa).

It belongs to the ATPase delta chain family. As to quaternary structure, F-type ATPases have 2 components, F(1) - the catalytic core - and F(0) - the membrane proton channel. F(1) has five subunits: alpha(3), beta(3), gamma(1), delta(1), epsilon(1). F(0) has three main subunits: a(1), b(2) and c(10-14). The alpha and beta chains form an alternating ring which encloses part of the gamma chain. F(1) is attached to F(0) by a central stalk formed by the gamma and epsilon chains, while a peripheral stalk is formed by the delta and b chains.

The protein localises to the cell membrane. In terms of biological role, f(1)F(0) ATP synthase produces ATP from ADP in the presence of a proton or sodium gradient. F-type ATPases consist of two structural domains, F(1) containing the extramembraneous catalytic core and F(0) containing the membrane proton channel, linked together by a central stalk and a peripheral stalk. During catalysis, ATP synthesis in the catalytic domain of F(1) is coupled via a rotary mechanism of the central stalk subunits to proton translocation. This protein is part of the stalk that links CF(0) to CF(1). It either transmits conformational changes from CF(0) to CF(1) or is implicated in proton conduction. The protein is ATP synthase subunit delta of Mycoplasmoides gallisepticum (strain R(low / passage 15 / clone 2)) (Mycoplasma gallisepticum).